The chain runs to 188 residues: MYNILKKSFYKQKSLDVASSLLGKMLLFNQHKGIITETEAYIGQDDQAAHSFHGYTKRTAVMFGNPGFSYVYLIYGMYHCLNVVTEPEGFPAAILIRSIILLSKNTPHTKVNGPGKICKILHITKEHNNIDMTANHSFCICDTNLNIDDYICTPRIGISKATDKFWRLVIPNVTSLQYIDTKLVCTLT.

This sequence belongs to the DNA glycosylase MPG family.

This chain is Putative 3-methyladenine DNA glycosylase, found in Ehrlichia ruminantium (strain Gardel).